We begin with the raw amino-acid sequence, 419 residues long: Tyrosine--tRNA ligase (419 aa).

Tyrosine 34 lines the L-tyrosine pocket. The 'HIGH' region signature appears at 39-48; it reads PTADSLHIGN. L-tyrosine-binding residues include tyrosine 169 and glutamine 173. A 'KMSKS' region motif is present at residues 230-234; that stretch reads KFGKT. Position 233 (lysine 233) interacts with ATP. The S4 RNA-binding domain occupies 352–419; sequence VPLVELLVSA…KKKYYLIRYA (68 aa).

Belongs to the class-I aminoacyl-tRNA synthetase family. TyrS type 1 subfamily. As to quaternary structure, homodimer.

The protein resides in the cytoplasm. The catalysed reaction is tRNA(Tyr) + L-tyrosine + ATP = L-tyrosyl-tRNA(Tyr) + AMP + diphosphate + H(+). Its function is as follows. Catalyzes the attachment of tyrosine to tRNA(Tyr) in a two-step reaction: tyrosine is first activated by ATP to form Tyr-AMP and then transferred to the acceptor end of tRNA(Tyr). This is Tyrosine--tRNA ligase from Bacillus caldotenax.